A 357-amino-acid polypeptide reads, in one-letter code: GTPase Obg (357 aa).

The region spanning M1 to L159 is the Obg domain. The OBG-type G domain occupies A160–E343. Residues G166 to S173, F191 to Y195, D213 to G216, N293 to D296, and S324 to V326 each bind GTP. S173 and T193 together coordinate Mg(2+).

This sequence belongs to the TRAFAC class OBG-HflX-like GTPase superfamily. OBG GTPase family. Monomer. It depends on Mg(2+) as a cofactor.

The protein resides in the cytoplasm. An essential GTPase which binds GTP, GDP and possibly (p)ppGpp with moderate affinity, with high nucleotide exchange rates and a fairly low GTP hydrolysis rate. Plays a role in control of the cell cycle, stress response, ribosome biogenesis and in those bacteria that undergo differentiation, in morphogenesis control. This Xylella fastidiosa (strain M23) protein is GTPase Obg.